An 87-amino-acid polypeptide reads, in one-letter code: Beta-toxin Ct17 (87 aa).

The N-terminal stretch at 1 to 19 is a signal peptide; it reads MNSLLMITACLVLIGTVWA. Residues 20-85 enclose the LCN-type CS-alpha/beta domain; sequence KKDGYLVDKT…TWPLPNKRCG (66 aa). 4 cysteine pairs are disulfide-bonded: Cys31/Cys84, Cys35/Cys60, Cys44/Cys65, and Cys48/Cys67. Cys84 is modified (cysteine amide).

The protein belongs to the long (4 C-C) scorpion toxin superfamily. Sodium channel inhibitor family. Beta subfamily. As to expression, expressed by the venom gland.

The protein localises to the secreted. Its function is as follows. Beta toxins bind voltage-independently at site-4 of sodium channels (Nav) and shift the voltage of activation toward more negative potentials thereby affecting sodium channel activation and promoting spontaneous and repetitive firing. Is possibly lethal to mice, freshwater shrimp and crickets. The protein is Beta-toxin Ct17 of Centruroides tecomanus (Scorpion).